The following is a 750-amino-acid chain: MFTENQNNNQRHALKTEIKTVFNSDSGVTYFSILIETSSKMSLYNVIIKTFITQLQKANRECQIQIITYGDSVNTIFEFDSEPNELKDSLKEIKFSKDNEEAKLGEAMRMCFNNIESNWSSDLMSKIIIISSGQSTDDSSDDLVDILSLDNNSIYGLAGCNLANKSSDEAVKDLQSLLPDQKVIPLGKNPSQDIRLLMNGGGGAANGGGAANGASSSDEHSINCPVNIEVYPHTNETKSIKDDLLLDVVIKPDGNTASVPSGTKIKFLSNKYYSGYTIQLKQNLVFGEPYEETIKLEFKKGQMEKTQFENFPSKIIFHIELANDRDNVHEGFVALNISYFLGELKSKYRCCIGVEGEIGNGKSTCLNGFVNLFNPVGELEEYFNANRTSGTHVTTSINNTSLKEILSAKHYIHPVQESFHDIDIAWSDSWGFVDTDVQLRHKAEGRIHHGTKKDECTILQPDDRYRIDCFIFVVSIRNFTNPASMQRIEKKIKEVLQMNITPLLAITFSDTLSKNQLQDVMKNKVAELSVQESNTFIISNYTEKETHKDISKDVQYLRLLTKAVQLCKVKNEKDIMNKVKGISNLSINDNNNSFNQTPIKNQPFFESSSTSSPSPAFFRSPIQQQQQQTSTTSTQSPSPSSSSASTPPPPSQMLNEQPSKTINVTIDVVTDSSGTVLTSFEIESSTNESVSELKCKLINEIDPEMNANDWSITKESGTVLFESARLSSIIKSFDNSDSIKLVLKKKQKLF.

The 233-residue stretch at 17–249 (EIKTVFNSDS…IKDDLLLDVV (233 aa)) folds into the VWFA domain. Composition is skewed to low complexity over residues 586 to 595 (SINDNNNSFN) and 603 to 645 (PFFE…SSAS). A disordered region spans residues 586–657 (SINDNNNSFN…PPPSQMLNEQ (72 aa)).

The chain is von Willebrand factor A domain-containing protein DDB_G0292188 from Dictyostelium discoideum (Social amoeba).